Here is a 397-residue protein sequence, read N- to C-terminus: Fractalkine (397 aa).

A signal peptide spans 1–24 (MAPISLSWLLRLATFCHLTVLLAG). Positions 25-100 (QHHGVTKCNI…RQAAALTRNG (76 aa)) are chemokine and involved in interaction with ITGAV:ITGB3 and ITGA4:ITGB1. The Extracellular segment spans residues 25-341 (QHHGVTKCNI…PDAQAATRRQ (317 aa)). Cystine bridges form between C32–C58 and C36–C74. An N-linked (GlcNAc...) asparagine glycan is attached at N33. The segment at 101–341 (GTFEKQIGEV…PDAQAATRRQ (241 aa)) is mucin-like stalk. 2 disordered regions span residues 128–265 (EPEA…REEM) and 289–309 (VPVS…SWTP). Residues 133–147 (GESSSLEPTPSSQEA) show a composition bias toward polar residues. O-linked (GalNAc...) threonine glycosylation occurs at T183. Positions 193–202 (TAATWQSSAP) are enriched in polar residues. The span at 219-243 (PSTQDPSTQASTASSPAPEENAPSE) shows a compositional bias: low complexity. S253 carries O-linked (GalNAc...) serine glycosylation. O-linked (GalNAc...) threonine glycosylation is present at T329. The chain crosses the membrane as a helical span at residues 342-362 (AVGLLAFLGLLFCLGVAMFTY). The Cytoplasmic portion of the chain corresponds to 363–397 (QSLQGCPRKMAGEMAEGLRYIPRSCGSNSYVLVPV).

Belongs to the intercrine delta family. As to quaternary structure, monomer. Forms a ternary complex with CX3CR1 and ITGAV:ITGB3 or ITGA4:ITGB1. In terms of assembly, (Microbial infection) Interacts with pox virus crmD; this inhibits cell migration mediated by CX3CL1. (Microbial infection) Interacts (via N-terminus) with human cytomegalovirus (HHV-5) US28. As to quaternary structure, (Microbial infection) Interacts with P.falciparum (strain 3D7) CBP1 and CBP2 (via their extracellular domains); the interaction mediates the adhesion of infected erythrocytes with endothelial cells. Post-translationally, a soluble short 95 kDa form may be released by proteolytic cleavage from the long membrane-anchored form. In terms of processing, O-glycosylated with core 1 or possibly core 8 glycans. In terms of tissue distribution, expressed in the seminal plasma, endometrial fluid and follicular fluid (at protein level). Small intestine, colon, testis, prostate, heart, brain, lung, skeletal muscle, kidney and pancreas. Most abundant in the brain and heart.

It is found in the cell membrane. It localises to the secreted. Chemokine that acts as a ligand for both CX3CR1 and integrins ITGAV:ITGB3 and ITGA4:ITGB1. The CX3CR1-CX3CL1 signaling exerts distinct functions in different tissue compartments, such as immune response, inflammation, cell adhesion and chemotaxis. Regulates leukocyte adhesion and migration processes at the endothelium. Can activate integrins in both a CX3CR1-dependent and CX3CR1-independent manner. In the presence of CX3CR1, activates integrins by binding to the classical ligand-binding site (site 1) in integrins. In the absence of CX3CR1, binds to a second site (site 2) in integrins which is distinct from site 1 and enhances the binding of other integrin ligands to site 1. In terms of biological role, the soluble form is chemotactic for T-cells and monocytes, but not for neutrophils. Its function is as follows. The membrane-bound form promotes adhesion of those leukocytes to endothelial cells. Functionally, (Microbial infection) Mediates the cytoadherence of erythrocytes infected with parasite P.falciparum (strain 3D7) with endothelial cells by interacting with P.falciparum CBP1 and CBP2 expressed at the surface of erythrocytes. The adhesion prevents the elimination of infected erythrocytes by the spleen. This chain is Fractalkine, found in Homo sapiens (Human).